Consider the following 514-residue polypeptide: Membrane-bound lytic murein transglycosylase F (514 aa).

Residues 1–30 (MKKLKINYLFIGILTLLLAAALWPSIPWFG) form the signal peptide. Residues 31 to 269 (KTENHIAAIQ…RIEEKYLGHG (239 aa)) are non-LT domain. Residues 270–514 (DDFDYVDTRS…LFTPQKKEEK (245 aa)) form an LT domain region. Glu-314 is an active-site residue.

In the N-terminal section; belongs to the bacterial solute-binding protein 3 family. The protein in the C-terminal section; belongs to the transglycosylase Slt family.

It localises to the cell outer membrane. The enzyme catalyses Exolytic cleavage of the (1-&gt;4)-beta-glycosidic linkage between N-acetylmuramic acid (MurNAc) and N-acetylglucosamine (GlcNAc) residues in peptidoglycan, from either the reducing or the non-reducing ends of the peptidoglycan chains, with concomitant formation of a 1,6-anhydrobond in the MurNAc residue.. Its function is as follows. Murein-degrading enzyme that degrades murein glycan strands and insoluble, high-molecular weight murein sacculi, with the concomitant formation of a 1,6-anhydromuramoyl product. Lytic transglycosylases (LTs) play an integral role in the metabolism of the peptidoglycan (PG) sacculus. Their lytic action creates space within the PG sacculus to allow for its expansion as well as for the insertion of various structures such as secretion systems and flagella. The protein is Membrane-bound lytic murein transglycosylase F of Salmonella choleraesuis (strain SC-B67).